The following is a 361-amino-acid chain: Phospho-N-acetylmuramoyl-pentapeptide-transferase (361 aa).

10 helical membrane-spanning segments follow: residues L28–L48, T74–L94, T99–A119, S133–D153, L168–S188, V203–I223, T236–F256, V263–I283, I288–V308, and K338–L358.

The protein belongs to the glycosyltransferase 4 family. MraY subfamily. Requires Mg(2+) as cofactor.

Its subcellular location is the cell inner membrane. The enzyme catalyses UDP-N-acetyl-alpha-D-muramoyl-L-alanyl-gamma-D-glutamyl-meso-2,6-diaminopimeloyl-D-alanyl-D-alanine + di-trans,octa-cis-undecaprenyl phosphate = di-trans,octa-cis-undecaprenyl diphospho-N-acetyl-alpha-D-muramoyl-L-alanyl-D-glutamyl-meso-2,6-diaminopimeloyl-D-alanyl-D-alanine + UMP. It functions in the pathway cell wall biogenesis; peptidoglycan biosynthesis. Catalyzes the initial step of the lipid cycle reactions in the biosynthesis of the cell wall peptidoglycan: transfers peptidoglycan precursor phospho-MurNAc-pentapeptide from UDP-MurNAc-pentapeptide onto the lipid carrier undecaprenyl phosphate, yielding undecaprenyl-pyrophosphoryl-MurNAc-pentapeptide, known as lipid I. The protein is Phospho-N-acetylmuramoyl-pentapeptide-transferase of Rickettsia massiliae (strain Mtu5).